The sequence spans 277 residues: F41 fimbrial protein (277 aa).

The first 22 residues, 1–22, serve as a signal peptide directing secretion; the sequence is MKKTLIALAVAASAAVSGSVMA.

The protein belongs to the fimbrial K88 protein family.

Its subcellular location is the fimbrium. Functionally, fimbriae (also called pili), polar filaments radiating from the surface of the bacterium to a length of 0.5-1.5 micrometers and numbering 100-300 per cell, enable bacteria to colonize the epithelium of specific host organs. This chain is F41 fimbrial protein (FimF41a), found in Escherichia coli.